A 2150-amino-acid chain; its full sequence is Zinc finger protein sdc-3 (2150 aa).

Residues 443–987 form a dosage compensation domain 1 region; it reads QEITSPMFAL…DQVENEEPER (545 aa). Disordered stretches follow at residues 874–894, 1261–1373, 1411–1448, and 1491–1670; these read EKEW…EEED, GSVV…GPEV, FETS…GPIN, and EVLQ…SEKL. The span at 1267 to 1293 shows a compositional bias: polar residues; that stretch reads TNQQEENVTSEGPTLQEGSSIPSSSHI. The segment covering 1321-1333 has biased composition (basic residues); the sequence is KKSGKTTRGRPKK. Over residues 1347 to 1357 the composition is skewed to basic and acidic residues; sequence GQKEEAAHEPE. The segment covering 1504-1524 has biased composition (basic residues); that stretch reads SSKKRGRRRKKTPPHIAKARK. The tract at residues 1508-1516 is sex determination domain; that stretch reads RGRRRKKTP. Residues 1585–1598 show a composition bias toward basic and acidic residues; the sequence is EDLHETERPGHVGE. Over residues 1638–1648 the composition is skewed to polar residues; sequence IQSQAGTNASP. 2 C2H2-type zinc fingers span residues 2078–2105 and 2117–2141; these read HKCV…GKLH and DDCQ…NHHH. A dosage compensation domain 2 region spans residues 2080-2105; it reads CVQCSIRNQSVYFSSYSLLELHGKLH.

As to quaternary structure, component of the SDC complex, which consists of sdc-1, sdc-2 and sdc-3. Within the complex, interacts with sdc-1 and sdc-2. Interacts with dpy-21. In terms of processing, sumoylated. Sumoylation is important for assembly of the dosage compensation complex and its robust binding to the X chromosome. In terms of tissue distribution, expressed in somatic and in germline tissues in hermaphrodites (XX). In males (XO), only present in embryos younger than the 100-cell stage (at protein level).

The protein resides in the chromosome. Its subcellular location is the nucleus. Component of the SDC complex that functions in sex determination and in X chromosome dosage compensation specifically in hermaphrodite (XX) animals. Plays a central role in the recruitment of the condensin I-like dosage compensation complex to the male sex-determining autosomal gene her-1, thereby contributing to its repression and initiating hermaphrodite sexual development. Involved in the recruitment and assembly of the dosage compensation complex and the dosage compensation protein dpy-21 onto the X chromosomes in hermaphrodites, which leads to a reduction of X-linked gene transcription and an equalization of X-linked gene expression between the sexes. The polypeptide is Zinc finger protein sdc-3 (sdc-3) (Caenorhabditis elegans).